A 259-amino-acid chain; its full sequence is Aliphatic sulfonates import ATP-binding protein SsuB 1 (259 aa).

In terms of domain architecture, ABC transporter spans 15–229; the sequence is VECRRITRRF…QASTPGFQAL (215 aa). An ATP-binding site is contributed by 47-54; the sequence is GSSGSGKT.

It belongs to the ABC transporter superfamily. Aliphatic sulfonates importer (TC 3.A.1.17.2) family. As to quaternary structure, the complex is composed of two ATP-binding proteins (SsuB), two transmembrane proteins (SsuC) and a solute-binding protein (SsuA).

It localises to the cell inner membrane. The enzyme catalyses ATP + H2O + aliphatic sulfonate-[sulfonate-binding protein]Side 1 = ADP + phosphate + aliphatic sulfonateSide 2 + [sulfonate-binding protein]Side 1.. Functionally, part of the ABC transporter complex SsuABC involved in aliphatic sulfonates import. Responsible for energy coupling to the transport system. The chain is Aliphatic sulfonates import ATP-binding protein SsuB 1 from Pseudomonas fluorescens (strain ATCC BAA-477 / NRRL B-23932 / Pf-5).